We begin with the raw amino-acid sequence, 60 residues long: Ribosome biogenesis protein Nop10 (60 aa).

The disordered stretch occupies residues 37–60; it reads APAPFDPADPHGKYRRALKERRRL. A compositionally biased stretch (basic residues) spans 49–60; sequence KYRRALKERRRL.

The protein belongs to the NOP10 family.

Functionally, involved in ribosome biogenesis; more specifically in 18S rRNA pseudouridylation and in cleavage of pre-rRNA. The sequence is that of Ribosome biogenesis protein Nop10 from Halobacterium salinarum (strain ATCC 29341 / DSM 671 / R1).